Reading from the N-terminus, the 531-residue chain is MESQLWNWILPLLISSLLISFVAFYGFFVKPKRNGLRHDRKTVSTVTSDVGSVNITGDTVADVIVVGAGVAGSALAYTLGKDKRRVHVIERDLSEPDRIVGELLQPGGYLKLLELGIEDCVEEIDAQRVYGYALFKNGKRIRLAYPLEKFHEDVSGRSFHNGRFIQRMREKAASLPNVQLEQGTVLSLLEENGTIKGVRYKNKAGEEQTAFAALTIVCDGCFSNLRRSLCNPQVEVPSCFVGLVLENCNLPYANHGHVVLADPSPILMYPISSTEVRCLVDVPGQKVPSIANGEMKNYLKTVVAPQMPHEVYDSFIAAVDKGNIKSMPNRSMPASPYPTPGALLMGDAFNMRHPLTGGGMTVALADIVVLRNLLRPLRDLSDGASLCKYLESFYTLRKPVAATINTLANALYQVFCSSENEARNEMREACFDYLGLGGMCTSGPVSLLSGLNPRPLTLVCHFFAVAVYGVIRLLIPFPSPKRIWLGAKLISGASGIIFPIIKAEGVRQMFFPATVPAYYYKAPTVGETKCS.

A helical membrane pass occupies residues 9-29 (ILPLLISSLLISFVAFYGFFV). Residues 70–71 (VA), 90–91 (ER), Arg98, Arg169, Val185, Asp347, and Met360 contribute to the FAD site. A run of 2 helical transmembrane segments spans residues 458 to 478 (LVCH…IPFP) and 483 to 503 (IWLG…IIKA).

This sequence belongs to the squalene monooxygenase family. Requires FAD as cofactor. As to expression, expressed in seedlings, leaves, stems, inflorescences, sepals, style and siliques. Expressed in expanded cotyledons, root tips and cortical cells of the root elongation zone, but not in root hair cells. In leaves, expressed in most cells, with a very strong expression in stomata.

It is found in the membrane. The enzyme catalyses squalene + reduced [NADPH--hemoprotein reductase] + O2 = (S)-2,3-epoxysqualene + oxidized [NADPH--hemoprotein reductase] + H2O + H(+). It functions in the pathway terpene metabolism; lanosterol biosynthesis; lanosterol from farnesyl diphosphate: step 2/3. In terms of biological role, catalyzes the stereospecific oxidation of squalene to (S)-2,3-epoxysqualene, and is considered to be a rate-limiting enzyme in steroid biosynthesis. Can produce not only oxidosqualene, but also 2,3:22,23-dioxidosqualene. Main squalene epoxidase in the root. Sqe1 mutants may show defects in membrane lipid rafts, impairing the correct localization of RHD2 NADPH oxidase and the proper polarized production of ROS. The polypeptide is Squalene epoxidase 1 (SQE1) (Arabidopsis thaliana (Mouse-ear cress)).